The chain runs to 738 residues: Melanotransferrin (738 aa).

The first 19 residues, 1–19 (MRLLSVTFWLLLSLRTVVC), serve as a signal peptide directing secretion. 2 consecutive Transferrin-like domains span residues 23–357 (VQWC…GLLC) and 366–706 (LRWC…GMLS). Disulfide bonds link Cys-26–Cys-63 and Cys-36–Cys-54. 2 residues coordinate Fe(3+): Asp-78 and Tyr-107. Asn-118 is a glycosylation site (N-linked (GlcNAc...) asparagine). 4 disulfides stabilise this stretch: Cys-130–Cys-216, Cys-172–Cys-189, Cys-186–Cys-199, and Cys-257–Cys-271. Thr-132 is a hydrogencarbonate binding site. An N-linked (GlcNAc...) asparagine glycan is attached at Asn-135. Hydrogencarbonate contacts are provided by Arg-136, Val-138, and Gly-139. Tyr-210 lines the Fe(3+) pocket. The Fe(3+) site is built by His-279 and Tyr-451. Ser-462 bears the Phosphoserine mark. Residue Asn-515 is glycosylated (N-linked (GlcNAc...) asparagine). Residues Tyr-556 and His-625 each contribute to the Fe(3+) site. Cys-709 is lipidated: GPI-anchor amidated cysteine. Positions 710 to 738 (SGAGAAVQRVPLLALLLLTLAAGLLPRVL) are cleaved as a propeptide — removed in mature form.

Belongs to the transferrin family.

The protein localises to the cell membrane. In terms of biological role, involved in iron cellular uptake. Seems to be internalized and then recycled back to the cell membrane. Binds a single atom of iron per subunit. Could also bind zinc. This chain is Melanotransferrin (Meltf), found in Mus musculus (Mouse).